Reading from the N-terminus, the 467-residue chain is Acetaldehyde dehydrogenase (acetylating) EutE (467 aa).

The targets protein to the BMC stretch occupies residues 1 to 19 (MNQQDIEQVVKAVLLKMKD).

This sequence belongs to the EutE/PduP family. As to quaternary structure, interacts with EutS, which targets it to the interior of the BMC.

The protein localises to the bacterial microcompartment. The enzyme catalyses acetaldehyde + NAD(+) + CoA = acetyl-CoA + NADH + H(+). The protein operates within amine and polyamine degradation; ethanolamine degradation. In terms of biological role, acts as the second step in ethanolamine degradation by converting acetaldehyde into acetyl-CoA. Has a very strong preference for NAD(+) over NADP(+) in both catalytic directions. May play a role in bacterial microcompartment (BMC) assembly or maintenance. Directly targeted to the BMC. Functionally, expression of the eut operon allows this bacteria to use ethanolamine (EA) as a carbon, nitrogen and energy source. It relies on cobalamin (vitamin B12) both as a cofactor for the ethanolamine ammonia-lyase (EAL) activity and to induce the operon. EA enhances bacterial survival in macrophages in a concentration-dependent manner, suggesting it is an important nutrient during infection. The sequence is that of Acetaldehyde dehydrogenase (acetylating) EutE from Salmonella typhimurium (strain LT2 / SGSC1412 / ATCC 700720).